A 317-amino-acid polypeptide reads, in one-letter code: tRNA uridine(34) hydroxylase (317 aa).

One can recognise a Rhodanese domain in the interval 129-223; sequence TDPEVLLIDT…YLEEVPEQES (95 aa). The active-site Cysteine persulfide intermediate is the cysteine 183. Residues 298 to 317 are disordered; it reads AKARNQPHPIGRNYRLPSEA.

Belongs to the TrhO family.

The enzyme catalyses uridine(34) in tRNA + AH2 + O2 = 5-hydroxyuridine(34) in tRNA + A + H2O. Functionally, catalyzes oxygen-dependent 5-hydroxyuridine (ho5U) modification at position 34 in tRNAs. The polypeptide is tRNA uridine(34) hydroxylase (Pseudomonas syringae pv. tomato (strain ATCC BAA-871 / DC3000)).